The following is a 33-amino-acid chain: Cytochrome b6-f complex subunit 6 (33 aa).

A helical membrane pass occupies residues 4-24 (ITIISYFGLLLASIIFTLVLF).

The protein belongs to the PetL family. The 4 large subunits of the cytochrome b6-f complex are cytochrome b6, subunit IV (17 kDa polypeptide, PetD), cytochrome f and the Rieske protein, while the 4 small subunits are PetG, PetL, PetM and PetN. The complex functions as a dimer.

It localises to the plastid. It is found in the chloroplast thylakoid membrane. In terms of biological role, component of the cytochrome b6-f complex, which mediates electron transfer between photosystem II (PSII) and photosystem I (PSI), cyclic electron flow around PSI, and state transitions. PetL is important for photoautotrophic growth as well as for electron transfer efficiency and stability of the cytochrome b6-f complex. The protein is Cytochrome b6-f complex subunit 6 of Pinus mugo (Dwarf mountain pine).